Here is a 417-residue protein sequence, read N- to C-terminus: MDKLKISANGPLNGEITVSGAKNAALPLMCAGLLTSGTLRLKNVPMLADVKTTQKLLQGMGARVLTDNISEFEINGGTVNNTCAPYELVRTMRASILVLGPTLARFGEAQVSLPGGCAIGSRPVDQHLKGLEAMGAEIVIEHGYVKAKGKLKGTRVAMDVVTVGGTENLLMAATLAEGTTVLENCAIEPEVVDLAECLVKMGAKISGIGTSTMIVEGVDELQGCEHSVVPDRIEAGTFLCAVAITGGRVVLRNAAPKTMEVVLDKLVEAGAVIEAGDDWIAIDMRQRPKAVDIRTVVHPGFPTDMQAQFMALNAVAEGSCRVVETIFENRFMHVPELNRMGANITTEGNTAFVQGVEQLSGAVVKATDLRASASLVIAGLAARGETVVEQIYHLDRGYENIEKKLGSVGAKIERVSG.

Residue 22 to 23 participates in phosphoenolpyruvate binding; the sequence is KN. Position 93 (Arg93) interacts with UDP-N-acetyl-alpha-D-glucosamine. The active-site Proton donor is the Cys117. Cys117 is subject to 2-(S-cysteinyl)pyruvic acid O-phosphothioketal. Residues 122 to 126, Asp304, and Ile326 contribute to the UDP-N-acetyl-alpha-D-glucosamine site; that span reads RPVDQ.

Belongs to the EPSP synthase family. MurA subfamily.

Its subcellular location is the cytoplasm. It catalyses the reaction phosphoenolpyruvate + UDP-N-acetyl-alpha-D-glucosamine = UDP-N-acetyl-3-O-(1-carboxyvinyl)-alpha-D-glucosamine + phosphate. Its pathway is cell wall biogenesis; peptidoglycan biosynthesis. In terms of biological role, cell wall formation. Adds enolpyruvyl to UDP-N-acetylglucosamine. The protein is UDP-N-acetylglucosamine 1-carboxyvinyltransferase of Neisseria meningitidis serogroup B (strain ATCC BAA-335 / MC58).